The chain runs to 704 residues: Structure-specific endonuclease subunit SLX1 homolog (704 aa).

The region spanning 4 to 90 (RFHCVYLLTS…TASARLRHTI (87 aa)) is the GIY-YIG domain. Disordered regions lie at residues 157-180 (ESPR…ADGV), 290-323 (ASFA…RVRT), and 354-378 (GAAL…SRPP). Polar residues-rich tracts occupy residues 161–175 (VGTQ…SLQG) and 311–320 (AGSSTPSPQR). An SLX1-type zinc finger spans residues 446-526 (CSLCALPLQP…PSQPCPCPLC (81 aa)). Disordered regions lie at residues 601-629 (VPGA…SSPI) and 650-671 (ASLA…GHSN). Residues 650–662 (ASLAALSPTSASP) are compositionally biased toward low complexity.

The protein belongs to the SLX1 family. As to quaternary structure, forms a heterodimer with a member of the SLX4 family. It depends on a divalent metal cation as a cofactor.

The protein resides in the nucleus. Functionally, catalytic subunit of a heterodimeric structure-specific endonuclease that resolves DNA secondary structures generated during DNA repair and recombination. Has endonuclease activity towards branched DNA substrates, introducing single-strand cuts in duplex DNA close to junctions with ss-DNA. This Leishmania major protein is Structure-specific endonuclease subunit SLX1 homolog.